The following is a 226-amino-acid chain: MLTQQELKQQAAEAALELVEQVAGPDVIIGVGTGSTADLFIDGLARFKGRLRGTVASSERSAARLAGHGLAVLDLNDVQSMPIYVDGADEIDPNLHMIKGGGGALTREKIVASVARRYICIADESKLVERLGRFPLPVEVIPMARNAVARGLSRLGGQPALREGFVTDNGNIILDVAGLSIADAPGLEKTINDIPGVVTCGLFALAGADVALLATQDGIRRLERRG.

Residues 33–36 (TGST), 86–89 (DGAD), and 99–102 (KGGG) each bind substrate. Glu-108 (proton acceptor) is an active-site residue. Lys-126 lines the substrate pocket.

The protein belongs to the ribose 5-phosphate isomerase family. As to quaternary structure, homodimer.

It catalyses the reaction aldehydo-D-ribose 5-phosphate = D-ribulose 5-phosphate. It functions in the pathway carbohydrate degradation; pentose phosphate pathway; D-ribose 5-phosphate from D-ribulose 5-phosphate (non-oxidative stage): step 1/1. In terms of biological role, catalyzes the reversible conversion of ribose-5-phosphate to ribulose 5-phosphate. This is Ribose-5-phosphate isomerase A from Bordetella bronchiseptica (strain ATCC BAA-588 / NCTC 13252 / RB50) (Alcaligenes bronchisepticus).